We begin with the raw amino-acid sequence, 514 residues long: Membrane-bound lytic murein transglycosylase F (514 aa).

An N-terminal signal peptide occupies residues 1 to 30; that stretch reads MKKLKINYLFIGILTLLLAAALWPSIPWFG. The tract at residues 31–269 is non-LT domain; it reads KTENHIAAIQ…RIEEKYLGHG (239 aa). An LT domain region spans residues 270-514; the sequence is DDFDYVDTRS…LFTPQKKEEK (245 aa). Glu-314 is a catalytic residue.

It in the N-terminal section; belongs to the bacterial solute-binding protein 3 family. The protein in the C-terminal section; belongs to the transglycosylase Slt family.

The protein localises to the cell outer membrane. The enzyme catalyses Exolytic cleavage of the (1-&gt;4)-beta-glycosidic linkage between N-acetylmuramic acid (MurNAc) and N-acetylglucosamine (GlcNAc) residues in peptidoglycan, from either the reducing or the non-reducing ends of the peptidoglycan chains, with concomitant formation of a 1,6-anhydrobond in the MurNAc residue.. Functionally, murein-degrading enzyme that degrades murein glycan strands and insoluble, high-molecular weight murein sacculi, with the concomitant formation of a 1,6-anhydromuramoyl product. Lytic transglycosylases (LTs) play an integral role in the metabolism of the peptidoglycan (PG) sacculus. Their lytic action creates space within the PG sacculus to allow for its expansion as well as for the insertion of various structures such as secretion systems and flagella. This Salmonella typhimurium (strain LT2 / SGSC1412 / ATCC 700720) protein is Membrane-bound lytic murein transglycosylase F.